The following is a 171-amino-acid chain: Nicotinamide-nucleotide adenylyltransferase (171 aa).

Belongs to the archaeal NMN adenylyltransferase family.

Its subcellular location is the cytoplasm. It carries out the reaction beta-nicotinamide D-ribonucleotide + ATP + H(+) = diphosphate + NAD(+). Its pathway is cofactor biosynthesis; NAD(+) biosynthesis; NAD(+) from nicotinamide D-ribonucleotide: step 1/1. This is Nicotinamide-nucleotide adenylyltransferase from Methanococcus maripaludis (strain C5 / ATCC BAA-1333).